The chain runs to 444 residues: Trigger factor (444 aa).

Positions 166–251 (GDQVVIDFEG…VHAVKAPKPA (86 aa)) constitute a PPIase FKBP-type domain.

Belongs to the FKBP-type PPIase family. Tig subfamily.

It localises to the cytoplasm. The enzyme catalyses [protein]-peptidylproline (omega=180) = [protein]-peptidylproline (omega=0). Involved in protein export. Acts as a chaperone by maintaining the newly synthesized protein in an open conformation. Functions as a peptidyl-prolyl cis-trans isomerase. The protein is Trigger factor (tig) of Rhodobacter capsulatus (strain ATCC BAA-309 / NBRC 16581 / SB1003).